Reading from the N-terminus, the 40-residue chain is Photosystem II reaction center protein J (40 aa).

A helical transmembrane segment spans residues 8–28; sequence IPLWIIGTVTGIPVIGLIGIF.

Belongs to the PsbJ family. PSII is composed of 1 copy each of membrane proteins PsbA, PsbB, PsbC, PsbD, PsbE, PsbF, PsbH, PsbI, PsbJ, PsbK, PsbL, PsbM, PsbT, PsbX, PsbY, PsbZ, Psb30/Ycf12, at least 3 peripheral proteins of the oxygen-evolving complex and a large number of cofactors. It forms dimeric complexes.

It localises to the plastid. The protein resides in the chloroplast thylakoid membrane. Its function is as follows. One of the components of the core complex of photosystem II (PSII). PSII is a light-driven water:plastoquinone oxidoreductase that uses light energy to abstract electrons from H(2)O, generating O(2) and a proton gradient subsequently used for ATP formation. It consists of a core antenna complex that captures photons, and an electron transfer chain that converts photonic excitation into a charge separation. This Citrus sinensis (Sweet orange) protein is Photosystem II reaction center protein J.